A 230-amino-acid polypeptide reads, in one-letter code: Protein tumorous testis (230 aa).

In terms of domain architecture, RRM spans 37-128 (GELFLSCIPR…RELVLKNVES (92 aa)).

In terms of assembly, part of a complex composed of at least tut, bam and bgcn; complex formation does not require RNA. Interacts with bam (via N-terminus); the interaction is direct. Interacts with bgcn; the interaction is indirect and is mediated by bam. As part of the bam-bgcn-tut complex associates with twin; may recruit the CCR4-NOT1 deadenylation complex to mRNA 3'UTRs to mediate post-transcriptional regulation of expression.

It localises to the cytoplasm. RNA binding protein that forms a complex with bam and bgcn, involved in 3'UTR-dependent regulation of a subset of mRNAs. Preferentially binds a long isoform of mei-P26 transcripts. Involved in 3'UTR-dependent post-transcriptional repression of several 3'-RNA processing factors. Involved in promoting germline stem cell lineage differentiation and mitosis-to-meiosis transition. Required for proper transit amplification of spermatogonia. In Drosophila melanogaster (Fruit fly), this protein is Protein tumorous testis.